The following is a 113-amino-acid chain: Molt-inhibiting hormone (113 aa).

A signal peptide spans Met1–Ala35. 3 cysteine pairs are disulfide-bonded: Cys42-Cys79, Cys59-Cys75, and Cys62-Cys88.

This sequence belongs to the arthropod CHH/MIH/GIH/VIH hormone family.

The protein resides in the secreted. In terms of biological role, inhibits Y-organs where molting hormone (ecdysteroid) is secreted. A molting cycle is initiated when MIH secretion diminishes or stops. The protein is Molt-inhibiting hormone of Callinectes sapidus (Blue crab).